The primary structure comprises 213 residues: tRNA (guanine-N(7)-)-methyltransferase (213 aa).

Residues glutamate 44, glutamate 69, aspartate 96, and aspartate 118 each contribute to the S-adenosyl-L-methionine site. Aspartate 118 is a catalytic residue. Substrate-binding positions include lysine 122, aspartate 154, and 191 to 194 (TEYE).

This sequence belongs to the class I-like SAM-binding methyltransferase superfamily. TrmB family.

It carries out the reaction guanosine(46) in tRNA + S-adenosyl-L-methionine = N(7)-methylguanosine(46) in tRNA + S-adenosyl-L-homocysteine. Its pathway is tRNA modification; N(7)-methylguanine-tRNA biosynthesis. Its function is as follows. Catalyzes the formation of N(7)-methylguanine at position 46 (m7G46) in tRNA. This is tRNA (guanine-N(7)-)-methyltransferase from Exiguobacterium sibiricum (strain DSM 17290 / CCUG 55495 / CIP 109462 / JCM 13490 / 255-15).